The primary structure comprises 293 residues: Heterogeneous nuclear ribonucleoprotein C-like 1 (293 aa).

The RRM domain occupies 16–87 (SRVFIGNLNT…QVVDINLAAE (72 aa)). 2 disordered regions span residues 137–177 (ALAV…KLKG) and 206–293 (KEQS…QDDS). The stretch at 177–225 (GDDLQAIKQELTQIKQKVDSLLENLEKIEKEQSKQEVEVKNAKSEEEQS) forms a coiled coil. 2 stretches are compositionally biased toward basic and acidic residues: residues 206–222 (KEQS…KSEE) and 229–240 (MKKDETHVKMES). Composition is skewed to acidic residues over residues 242-267 (GGAE…DDQL) and 275-284 (KEAEEGEDDR).

It belongs to the RRM HNRPC family. RALY subfamily.

It is found in the nucleus. Functionally, may play a role in nucleosome assembly by neutralizing basic proteins such as A and B core hnRNPs. In Homo sapiens (Human), this protein is Heterogeneous nuclear ribonucleoprotein C-like 1 (HNRNPCL1).